Here is a 229-residue protein sequence, read N- to C-terminus: Ribonuclease 3 (229 aa).

One can recognise an RNase III domain in the interval 5–127 (LSRLERQLGY…LIGAIYLDAG (123 aa)). Glu-40 serves as a coordination point for Mg(2+). The active site involves Asp-44. Mg(2+) contacts are provided by Asp-113 and Glu-116. Residue Glu-116 is part of the active site. A DRBM domain is found at 154–224 (DPKTRLQEFL…AAAALIALGV (71 aa)).

The protein belongs to the ribonuclease III family. As to quaternary structure, homodimer. Requires Mg(2+) as cofactor.

The protein localises to the cytoplasm. The enzyme catalyses Endonucleolytic cleavage to 5'-phosphomonoester.. Digests double-stranded RNA. Involved in the processing of primary rRNA transcript to yield the immediate precursors to the large and small rRNAs (23S and 16S). Processes some mRNAs, and tRNAs when they are encoded in the rRNA operon. Processes pre-crRNA and tracrRNA of type II CRISPR loci if present in the organism. In Pseudomonas fluorescens (strain ATCC BAA-477 / NRRL B-23932 / Pf-5), this protein is Ribonuclease 3.